Consider the following 180-residue polypeptide: uncharacterized protein (180 aa).

The stretch at 114 to 147 (EDIYEDIVDVRLENQSLEEQLEDFKECSRALKKY) forms a coiled coil.

Belongs to the mimivirus L74/L77/R857 family.

This is an uncharacterized protein from Acanthamoeba polyphaga mimivirus (APMV).